A 243-amino-acid polypeptide reads, in one-letter code: Zinc import ATP-binding protein ZnuC (243 aa).

The 218-residue stretch at 8-225 (LNLSNVSYYI…SEFQKLFGHH (218 aa)) folds into the ABC transporter domain. 40-47 (GPNGAGKS) lines the ATP pocket.

It belongs to the ABC transporter superfamily. Zinc importer (TC 3.A.1.15.5) family. In terms of assembly, the complex is composed of two ATP-binding proteins (ZnuC), two transmembrane proteins (ZnuB) and a solute-binding protein (ZnuA).

It localises to the cell inner membrane. The enzyme catalyses Zn(2+)(out) + ATP(in) + H2O(in) = Zn(2+)(in) + ADP(in) + phosphate(in) + H(+)(in). In terms of biological role, part of the ABC transporter complex ZnuABC involved in zinc import. Responsible for energy coupling to the transport system. The polypeptide is Zinc import ATP-binding protein ZnuC (Psychrobacter cryohalolentis (strain ATCC BAA-1226 / DSM 17306 / VKM B-2378 / K5)).